The chain runs to 353 residues: Putative 3-oxoacyl-[acyl-carrier-protein] synthase 3 (353 aa).

Active-site residues include Cys122, His268, and Asn299.

The protein belongs to the thiolase-like superfamily. FabH family. As to quaternary structure, homodimer.

It localises to the cytoplasm. It carries out the reaction malonyl-[ACP] + acetyl-CoA + H(+) = 3-oxobutanoyl-[ACP] + CO2 + CoA. It functions in the pathway lipid metabolism; fatty acid biosynthesis. In terms of biological role, may catalyze the condensation reaction of fatty acid synthesis by the addition to an acyl acceptor of two carbons from malonyl-ACP. This Campylobacter jejuni subsp. jejuni serotype O:2 (strain ATCC 700819 / NCTC 11168) protein is Putative 3-oxoacyl-[acyl-carrier-protein] synthase 3.